The sequence spans 353 residues: MTQRKIIHIDCDCFYAAIEMRDEPELAGKPLAVGGSAERRGVIATCNYEARAYGVRSAMSSRHALKLCPDLTIVKPRMEAYKEASREIHSIFRDYTDLIEPLSLDEAFLDVSDTHHFSGSATRIAQDIRRRVSNQLHITVSAGVAPNKFLAKIASDWKKPNGLFVITPDQVEDFVASLPVTKLHGVGKVTADKLGRLGIVDCADLRSRSKLALVREFGSFGERLWSLAHGIDDRPVQNDSRRQSVSVENTYDTDLPDLAACLEKLPALLETLGTRMERMEGQYRPGKPFVKVKFHDFTQTTLEQSGAGRDLGSYEQLLTQAFARGGKPVRLLGIGVRLHDLRDAHEQLELFST.

The 182-residue stretch at Ile6 to Gly187 folds into the UmuC domain. Residues Asp10 and Asp105 each contribute to the Mg(2+) site. The active site involves Glu106.

This sequence belongs to the DNA polymerase type-Y family. As to quaternary structure, monomer. The cofactor is Mg(2+).

It localises to the cytoplasm. The catalysed reaction is DNA(n) + a 2'-deoxyribonucleoside 5'-triphosphate = DNA(n+1) + diphosphate. Poorly processive, error-prone DNA polymerase involved in untargeted mutagenesis. Copies undamaged DNA at stalled replication forks, which arise in vivo from mismatched or misaligned primer ends. These misaligned primers can be extended by PolIV. Exhibits no 3'-5' exonuclease (proofreading) activity. May be involved in translesional synthesis, in conjunction with the beta clamp from PolIII. In Pseudomonas syringae pv. tomato (strain ATCC BAA-871 / DC3000), this protein is DNA polymerase IV.